Consider the following 383-residue polypeptide: Carbamoyl phosphate synthase small chain (383 aa).

Positions 1-190 (MPHPSSRQAH…FDQRLKQHPD (190 aa)) are CPSase. Residues Ser-51, Gly-242, and Gly-244 each contribute to the L-glutamine site. Residues 194–381 (RVVAIDFGIK…VALMADRRDV (188 aa)) form the Glutamine amidotransferase type-1 domain. Cys-271 serves as the catalytic Nucleophile. L-glutamine-binding residues include Leu-272, Gln-275, Asn-311, Gly-313, and Phe-314. Residues His-354 and Glu-356 contribute to the active site.

The protein belongs to the CarA family. Composed of two chains; the small (or glutamine) chain promotes the hydrolysis of glutamine to ammonia, which is used by the large (or ammonia) chain to synthesize carbamoyl phosphate. Tetramer of heterodimers (alpha,beta)4.

The enzyme catalyses hydrogencarbonate + L-glutamine + 2 ATP + H2O = carbamoyl phosphate + L-glutamate + 2 ADP + phosphate + 2 H(+). It carries out the reaction L-glutamine + H2O = L-glutamate + NH4(+). It participates in amino-acid biosynthesis; L-arginine biosynthesis; carbamoyl phosphate from bicarbonate: step 1/1. The protein operates within pyrimidine metabolism; UMP biosynthesis via de novo pathway; (S)-dihydroorotate from bicarbonate: step 1/3. Small subunit of the glutamine-dependent carbamoyl phosphate synthetase (CPSase). CPSase catalyzes the formation of carbamoyl phosphate from the ammonia moiety of glutamine, carbonate, and phosphate donated by ATP, constituting the first step of 2 biosynthetic pathways, one leading to arginine and/or urea and the other to pyrimidine nucleotides. The small subunit (glutamine amidotransferase) binds and cleaves glutamine to supply the large subunit with the substrate ammonia. In Parasynechococcus marenigrum (strain WH8102), this protein is Carbamoyl phosphate synthase small chain.